Reading from the N-terminus, the 34-residue chain is MVNWQVIGQLVSTGLIGLLGPAVIILLALKKGNL.

Residues 6–26 (VIGQLVSTGLIGLLGPAVIIL) form a helical membrane-spanning segment.

Belongs to the Psb30/Ycf12 family. In terms of assembly, PSII is composed of 1 copy each of membrane proteins PsbA, PsbB, PsbC, PsbD, PsbE, PsbF, PsbH, PsbI, PsbJ, PsbK, PsbL, PsbM, PsbT, PsbX, PsbY, PsbZ, Psb30/Ycf12, peripheral proteins of the oxygen-evolving complex and a large number of cofactors. It forms dimeric complexes.

It localises to the plastid. The protein resides in the chloroplast thylakoid membrane. A core subunit of photosystem II (PSII), probably helps stabilize the reaction center. This is Photosystem II reaction center protein Psb30 from Skeletonema costatum (Marine centric diatom).